Reading from the N-terminus, the 474-residue chain is Salutaridinol 7-O-acetyltransferase (474 aa).

The active-site Proton acceptor is the His-163. Residues 213 to 234 (ERLTSPSGMSEIPFSSTPEDTE) are disordered. Residues 214-230 (RLTSPSGMSEIPFSSTP) show a composition bias toward polar residues. Asp-416 (proton acceptor) is an active-site residue.

It belongs to the plant acyltransferase family. In terms of tissue distribution, expressed in root, stem, leaf and capsule of the mature plant. Restricted to sieve elements of the phloem adjacent or proximal to laticifers.

It carries out the reaction (7S)-salutaridinol + acetyl-CoA = (7S)-O-acetylsalutaridinol + CoA. The protein operates within alkaloid biosynthesis; morphine biosynthesis. Functionally, acetyltransferase involved in biosynthesis of morphinan-type benzylisoquinoline and opiate alkaloids natural products. Catalyzes the conversion of the phenanthrene alkaloid salutaridinol to salutaridinol-7-O-acetate, the immediate precursor of thebaine along the morphine biosynthetic pathway. Conversion of 7-O-acetylsalutaridinol into thebaine is spontaneous. The chain is Salutaridinol 7-O-acetyltransferase from Papaver somniferum (Opium poppy).